Here is a 410-residue protein sequence, read N- to C-terminus: Putative nickel insertion protein (410 aa).

It belongs to the LarC family.

This chain is Putative nickel insertion protein, found in Cyanothece sp. (strain PCC 7425 / ATCC 29141).